The following is a 233-amino-acid chain: Large ribosomal subunit protein uL1 (233 aa).

This sequence belongs to the universal ribosomal protein uL1 family. As to quaternary structure, part of the 50S ribosomal subunit.

In terms of biological role, binds directly to 23S rRNA. The L1 stalk is quite mobile in the ribosome, and is involved in E site tRNA release. Its function is as follows. Protein L1 is also a translational repressor protein, it controls the translation of the L11 operon by binding to its mRNA. The polypeptide is Large ribosomal subunit protein uL1 (Rhizobium etli (strain CIAT 652)).